We begin with the raw amino-acid sequence, 566 residues long: Urease subunit alpha (566 aa).

A Urease domain is found at 128–566 (GGIDTHIHFI…LPMAQRYFLF (439 aa)). His133, His135, and Lys216 together coordinate Ni(2+). An N6-carboxylysine modification is found at Lys216. Position 218 (His218) interacts with substrate. Positions 245 and 271 each coordinate Ni(2+). The active-site Proton donor is the His319. Asp359 provides a ligand contact to Ni(2+).

It belongs to the metallo-dependent hydrolases superfamily. Urease alpha subunit family. In terms of assembly, heterotrimer of UreA (gamma), UreB (beta) and UreC (alpha) subunits. Three heterotrimers associate to form the active enzyme. It depends on Ni cation as a cofactor. Carboxylation allows a single lysine to coordinate two nickel ions.

It localises to the cytoplasm. It catalyses the reaction urea + 2 H2O + H(+) = hydrogencarbonate + 2 NH4(+). The protein operates within nitrogen metabolism; urea degradation; CO(2) and NH(3) from urea (urease route): step 1/1. The chain is Urease subunit alpha from Pseudomonas fluorescens (strain Pf0-1).